We begin with the raw amino-acid sequence, 359 residues long: tRNA-specific 2-thiouridylase MnmA (359 aa).

Residues 9-16 (GISGGVDS) and methionine 35 each bind ATP. Positions 95–97 (NPD) are interaction with target base in tRNA. The active-site Nucleophile is the cysteine 100. An intrachain disulfide couples cysteine 100 to cysteine 197. Glycine 124 is an ATP binding site. The interval 147 to 149 (KDQ) is interaction with tRNA. Cysteine 197 serves as the catalytic Cysteine persulfide intermediate. Positions 309–310 (RY) are interaction with tRNA.

The protein belongs to the MnmA/TRMU family.

It is found in the cytoplasm. The enzyme catalyses S-sulfanyl-L-cysteinyl-[protein] + uridine(34) in tRNA + AH2 + ATP = 2-thiouridine(34) in tRNA + L-cysteinyl-[protein] + A + AMP + diphosphate + H(+). In terms of biological role, catalyzes the 2-thiolation of uridine at the wobble position (U34) of tRNA, leading to the formation of s(2)U34. This chain is tRNA-specific 2-thiouridylase MnmA, found in Francisella tularensis subsp. tularensis (strain FSC 198).